The sequence spans 134 residues: Iron-sulfur cluster insertion protein ErpA (134 aa).

The iron-sulfur cluster site is built by C47, C126, and C128.

This sequence belongs to the HesB/IscA family. As to quaternary structure, homodimer. It depends on iron-sulfur cluster as a cofactor.

Required for insertion of 4Fe-4S clusters for at least IspG. This chain is Iron-sulfur cluster insertion protein ErpA, found in Coxiella burnetii (strain RSA 331 / Henzerling II).